Here is a 613-residue protein sequence, read N- to C-terminus: Dihydroxy-acid dehydratase (613 aa).

D81 provides a ligand contact to Mg(2+). Residue C122 participates in [2Fe-2S] cluster binding. Mg(2+) contacts are provided by D123 and K124. K124 bears the N6-carboxylysine mark. Position 195 (C195) interacts with [2Fe-2S] cluster. Position 491 (E491) interacts with Mg(2+). Residue S517 is the Proton acceptor of the active site.

This sequence belongs to the IlvD/Edd family. Homodimer. It depends on [2Fe-2S] cluster as a cofactor. The cofactor is Mg(2+).

It catalyses the reaction (2R)-2,3-dihydroxy-3-methylbutanoate = 3-methyl-2-oxobutanoate + H2O. The enzyme catalyses (2R,3R)-2,3-dihydroxy-3-methylpentanoate = (S)-3-methyl-2-oxopentanoate + H2O. It participates in amino-acid biosynthesis; L-isoleucine biosynthesis; L-isoleucine from 2-oxobutanoate: step 3/4. Its pathway is amino-acid biosynthesis; L-valine biosynthesis; L-valine from pyruvate: step 3/4. Functionally, functions in the biosynthesis of branched-chain amino acids. Catalyzes the dehydration of (2R,3R)-2,3-dihydroxy-3-methylpentanoate (2,3-dihydroxy-3-methylvalerate) into 2-oxo-3-methylpentanoate (2-oxo-3-methylvalerate) and of (2R)-2,3-dihydroxy-3-methylbutanoate (2,3-dihydroxyisovalerate) into 2-oxo-3-methylbutanoate (2-oxoisovalerate), the penultimate precursor to L-isoleucine and L-valine, respectively. This Buchnera aphidicola subsp. Melaphis rhois protein is Dihydroxy-acid dehydratase.